Here is a 272-residue protein sequence, read N- to C-terminus: Shikimate dehydrogenase (NADP(+)) (272 aa).

Shikimate is bound by residues 14–16 and Thr61; that span reads SLS. The Proton acceptor role is filled by Lys65. Asp102 contributes to the shikimate binding site. NADP(+) is bound by residues 127-131, 151-156, and Leu215; these read GAGGA and NRTPSK. Position 217 (Tyr217) interacts with shikimate. Position 239 (Gly239) interacts with NADP(+).

The protein belongs to the shikimate dehydrogenase family. Homodimer.

It catalyses the reaction shikimate + NADP(+) = 3-dehydroshikimate + NADPH + H(+). The protein operates within metabolic intermediate biosynthesis; chorismate biosynthesis; chorismate from D-erythrose 4-phosphate and phosphoenolpyruvate: step 4/7. Involved in the biosynthesis of the chorismate, which leads to the biosynthesis of aromatic amino acids. Catalyzes the reversible NADPH linked reduction of 3-dehydroshikimate (DHSA) to yield shikimate (SA). The polypeptide is Shikimate dehydrogenase (NADP(+)) (Coxiella burnetii (strain Dugway 5J108-111)).